The primary structure comprises 138 residues: Large ribosomal subunit protein uL16 (138 aa).

A compositionally biased stretch (basic residues) spans 1–13 (MLQPARRKYRKEQ). The interval 1–22 (MLQPARRKYRKEQKGRNTGVAT) is disordered.

The protein belongs to the universal ribosomal protein uL16 family. As to quaternary structure, part of the 50S ribosomal subunit.

In terms of biological role, binds 23S rRNA and is also seen to make contacts with the A and possibly P site tRNAs. The chain is Large ribosomal subunit protein uL16 from Polaromonas naphthalenivorans (strain CJ2).